The primary structure comprises 151 residues: Cyanate hydratase (151 aa).

Residues Arg92, Glu95, and Ser118 contribute to the active site.

It belongs to the cyanase family.

The catalysed reaction is cyanate + hydrogencarbonate + 3 H(+) = NH4(+) + 2 CO2. Its function is as follows. Catalyzes the reaction of cyanate with bicarbonate to produce ammonia and carbon dioxide. The polypeptide is Cyanate hydratase (Coprinopsis cinerea (strain Okayama-7 / 130 / ATCC MYA-4618 / FGSC 9003) (Inky cap fungus)).